The chain runs to 298 residues: 33 kDa chaperonin (298 aa).

2 cysteine pairs are disulfide-bonded: Cys-237–Cys-239 and Cys-270–Cys-273.

Belongs to the HSP33 family. Post-translationally, under oxidizing conditions two disulfide bonds are formed involving the reactive cysteines. Under reducing conditions zinc is bound to the reactive cysteines and the protein is inactive.

Its subcellular location is the cytoplasm. In terms of biological role, redox regulated molecular chaperone. Protects both thermally unfolding and oxidatively damaged proteins from irreversible aggregation. Plays an important role in the bacterial defense system toward oxidative stress. In Enterococcus faecalis (strain ATCC 700802 / V583), this protein is 33 kDa chaperonin.